The chain runs to 274 residues: Ribosomal RNA small subunit methyltransferase A (274 aa).

S-adenosyl-L-methionine-binding residues include Asn-17, Leu-19, Gly-44, Glu-65, Asp-89, and Asn-111.

The protein belongs to the class I-like SAM-binding methyltransferase superfamily. rRNA adenine N(6)-methyltransferase family. RsmA subfamily.

The protein resides in the cytoplasm. It carries out the reaction adenosine(1518)/adenosine(1519) in 16S rRNA + 4 S-adenosyl-L-methionine = N(6)-dimethyladenosine(1518)/N(6)-dimethyladenosine(1519) in 16S rRNA + 4 S-adenosyl-L-homocysteine + 4 H(+). In terms of biological role, specifically dimethylates two adjacent adenosines (A1518 and A1519) in the loop of a conserved hairpin near the 3'-end of 16S rRNA in the 30S particle. May play a critical role in biogenesis of 30S subunits. The polypeptide is Ribosomal RNA small subunit methyltransferase A (Buchnera aphidicola subsp. Schizaphis graminum (strain Sg)).